A 147-amino-acid polypeptide reads, in one-letter code: Small ribosomal subunit protein eS10B (147 aa).

A disordered region spans residues Thr-90–Ala-147. The span at Gly-103–Gly-127 shows a compositional bias: basic and acidic residues.

Belongs to the eukaryotic ribosomal protein eS10 family. As to quaternary structure, component of the small ribosomal subunit (SSU). Mature yeast ribosomes consist of a small (40S) and a large (60S) subunit. The 40S small subunit contains 1 molecule of ribosomal RNA (18S rRNA) and at least 33 different proteins. The large 60S subunit contains 3 rRNA molecules (25S, 5.8S and 5S rRNA) and at least 46 different proteins. eS10 interacts with GCN1 (via middle region); this interaction is direct and promotes GCN2 kinase activity.

It localises to the cytoplasm. Component of the ribosome, a large ribonucleoprotein complex responsible for the synthesis of proteins in the cell. The small ribosomal subunit (SSU) binds messenger RNAs (mRNAs) and translates the encoded message by selecting cognate aminoacyl-transfer RNA (tRNA) molecules. The large subunit (LSU) contains the ribosomal catalytic site termed the peptidyl transferase center (PTC), which catalyzes the formation of peptide bonds, thereby polymerizing the amino acids delivered by tRNAs into a polypeptide chain. The nascent polypeptides leave the ribosome through a tunnel in the LSU and interact with protein factors that function in enzymatic processing, targeting, and the membrane insertion of nascent chains at the exit of the ribosomal tunnel. eS10 plays a role as a positive regulator of the GCN2 kinase activity by stimulating GCN1-mediated GCN2 activation. This chain is Small ribosomal subunit protein eS10B (rps1002), found in Schizosaccharomyces pombe (strain 972 / ATCC 24843) (Fission yeast).